Consider the following 496-residue polypeptide: Fizzy-related protein homolog (496 aa).

Disordered regions lie at residues 28-51 (RRTLTPASSPVSSPSKHGDRFIPS), 64-88 (INENEKSPSQNRKAKDATSDNGKDG), and 105-166 (EKVQ…SPRK). T32 is subject to Phosphothreonine. A compositionally biased stretch (polar residues) spans 32–42 (TPASSPVSSPS). Residue S36 is modified to Phosphoserine. Residues 47–52 (RFIPSR) are involved in APC/FZR1 E3 ubiquitin-protein ligase complex activity. K69 carries the post-translational modification N6-acetyllysine. 2 stretches are compositionally biased toward basic and acidic residues: residues 76–86 (KAKDATSDNGK) and 106–126 (KVQDPQTEDRRLQPSTPEKKG). Phosphoserine occurs at positions 133, 138, 146, and 151. A compositionally biased stretch (polar residues) spans 146–160 (SPYSLSPVSNKSQKL). K159 is modified (N6-acetyllysine). 7 WD repeats span residues 182–222 (PELQ…VTRL), 227–266 (VEGDSVTSVGWSERGNLVAVGTHKGFVQIWDAAAGKKLSM), 269–306 (GHTARVGALAWNAEQLSSGSRDRMILQRDIRTPPLQSE), 311–350 (GHRQEVCGLKWSTDHQLLASGGNDNKLLVWNHSSLSPVQQ), 353–395 (EHLA…PLQC), 397–438 (DTGS…QVAK), and 441–480 (GHSYRVLYLAMSPDGEAIVTGAGDETLRFWNVFSKTRSTK).

It belongs to the WD repeat CDC20/Fizzy family. As to quaternary structure, the unphosphorylated form interacts with APC/C during mitosis. Interacts with NINL. Interacts (in complex with the anaphase promoting complex APC) with MAD2L2; inhibits FZR1-mediated APC/C activation. Interacts with SIRT2 and USP37. Interacts (via WD repeats) with MAK. Interacts with RBBP8/CtIP; this interaction leads to RBBP8 proteasomal degradation. Interacts with HECW2. Interacts with SASS6; the interaction is regulated by CENATAC and leads to SASS6 proteasomal degradation. Interacts (via N-terminus) with CCNF. Interacts with CDC6. Interacts with TK1 (via the KEN box). Post-translationally, acetylated. Deacetylated by SIRT2 at Lys-69 and Lys-159; deacetylation enhances the interaction of FZR1 with CDC27, leading to activation of anaphase promoting complex/cyclosome (APC/C). Following DNA damage, it is dephosphorylated by CDC14B in G2 phase, leading to its reassociation with the APC/C, and allowing an efficient G2 DNA damage checkpoint. Phosphorylated by MAK. In terms of processing, ubiquitinated by the SCF(CCNF) E3 ubiquitin-protein ligase complex; leading to its degradation by the proteasome. As to expression, isoform 2 is expressed at high levels in heart, liver, spleen and some cancer cell lines whereas isoform 3 is expressed only at low levels in these tissues.

Its subcellular location is the nucleus. The protein resides in the cytoplasm. It functions in the pathway protein modification; protein ubiquitination. Functionally, substrate-specific adapter for the anaphase promoting complex/cyclosome (APC/C) E3 ubiquitin-protein ligase complex. Associates with the APC/C in late mitosis, in replacement of CDC20, and activates the APC/C during anaphase and telophase. The APC/C remains active in degrading substrates to ensure that positive regulators of the cell cycle do not accumulate prematurely. At the G1/S transition FZR1 is phosphorylated, leading to its dissociation from the APC/C. Following DNA damage, it is required for the G2 DNA damage checkpoint: its dephosphorylation and reassociation with the APC/C leads to the ubiquitination of PLK1, preventing entry into mitosis. Acts as an adapter for APC/C to target the DNA-end resection factor RBBP8/CtIP for ubiquitination and subsequent proteasomal degradation. Through the regulation of RBBP8/CtIP protein turnover, may play a role in DNA damage response, favoring DNA double-strand repair through error-prone non-homologous end joining (NHEJ) over error-free, RBBP8-mediated homologous recombination (HR). The polypeptide is Fizzy-related protein homolog (Homo sapiens (Human)).